Reading from the N-terminus, the 318-residue chain is UDP-N-acetylenolpyruvoylglucosamine reductase (318 aa).

The FAD-binding PCMH-type domain occupies 38–204 (IGGVCPVIVE…LGIEILLKEG (167 aa)). Residue R182 is part of the active site. Over residues 212 to 229 (SLKDKRDRRNSSQPENKK) the composition is skewed to basic and acidic residues. The segment at 212-232 (SLKDKRDRRNSSQPENKKSAG) is disordered. S233 acts as the Proton donor in catalysis. Residue E310 is part of the active site.

This sequence belongs to the MurB family. FAD is required as a cofactor.

It localises to the cytoplasm. It catalyses the reaction UDP-N-acetyl-alpha-D-muramate + NADP(+) = UDP-N-acetyl-3-O-(1-carboxyvinyl)-alpha-D-glucosamine + NADPH + H(+). It functions in the pathway cell wall biogenesis; peptidoglycan biosynthesis. Its function is as follows. Cell wall formation. The chain is UDP-N-acetylenolpyruvoylglucosamine reductase from Leptospira interrogans serogroup Icterohaemorrhagiae serovar Lai (strain 56601).